The chain runs to 130 residues: Small ribosomal subunit protein uS9 (130 aa).

This sequence belongs to the universal ribosomal protein uS9 family.

The polypeptide is Small ribosomal subunit protein uS9 (Shewanella sediminis (strain HAW-EB3)).